Here is a 564-residue protein sequence, read N- to C-terminus: Potassium-transporting ATPase potassium-binding subunit (564 aa).

The next 10 helical transmembrane spans lie at 4 to 24 (YDFA…PWLG), 67 to 87 (TLAL…VLLL), 135 to 155 (LGLT…LVVL), 179 to 199 (LYGL…QGVP), 258 to 278 (FEVA…GHYV), 286 to 306 (AILA…LWSE), 382 to 402 (AGLY…GLMI), 420 to 440 (LLVA…AIAA), 487 to 507 (LMIG…ILAL), and 533 to 553 (GLLL…TLAL).

It belongs to the KdpA family. As to quaternary structure, the system is composed of three essential subunits: KdpA, KdpB and KdpC.

It is found in the cell inner membrane. In terms of biological role, part of the high-affinity ATP-driven potassium transport (or Kdp) system, which catalyzes the hydrolysis of ATP coupled with the electrogenic transport of potassium into the cytoplasm. This subunit binds the periplasmic potassium ions and delivers the ions to the membrane domain of KdpB through an intramembrane tunnel. The sequence is that of Potassium-transporting ATPase potassium-binding subunit from Pseudomonas putida (strain ATCC 47054 / DSM 6125 / CFBP 8728 / NCIMB 11950 / KT2440).